A 197-amino-acid chain; its full sequence is NADH-quinone oxidoreductase subunit B (197 aa).

The [4Fe-4S] cluster site is built by cysteine 76, cysteine 77, cysteine 141, and cysteine 171.

It belongs to the complex I 20 kDa subunit family. In terms of assembly, NDH-1 is composed of 14 different subunits. Subunits NuoB, C, D, E, F, and G constitute the peripheral sector of the complex. [4Fe-4S] cluster serves as cofactor.

Its subcellular location is the cell inner membrane. It carries out the reaction a quinone + NADH + 5 H(+)(in) = a quinol + NAD(+) + 4 H(+)(out). NDH-1 shuttles electrons from NADH, via FMN and iron-sulfur (Fe-S) centers, to quinones in the respiratory chain. The immediate electron acceptor for the enzyme in this species is believed to be ubiquinone. Couples the redox reaction to proton translocation (for every two electrons transferred, four hydrogen ions are translocated across the cytoplasmic membrane), and thus conserves the redox energy in a proton gradient. In Methylobacterium nodulans (strain LMG 21967 / CNCM I-2342 / ORS 2060), this protein is NADH-quinone oxidoreductase subunit B.